The sequence spans 342 residues: MNTETFSTPPHTLVIASRESRLAMWQAEHVRCALHKLYPSCDVKILGMTTRGDQILDRTLSKVGGKGLFVKELEAALADGRADLAVHSLKDVPMELPAGFALSTIMEREDPRDALVSNDYDSLAALPAGAVVGTSSLRREAMLRMRYPHLEVRPLRGNLDTRLSKLDRGDYAAIILAAAGLKRLGLGERIRALLDPEDSLPAAGQGALGIEIRADRADLAAWLAPLHHDHTAAAVEAERMVSRALGGSCEVPLAAYATWRDGALHLRGIVATPDGQRVLSAQASAPAPSVERAVALGQEVASALEQQGAMDIVRALSAASGPAAAKQGAAEDGAADSAATGE.

At cysteine 249 the chain carries S-(dipyrrolylmethanemethyl)cysteine. Residues 323–342 (AAAKQGAAEDGAADSAATGE) are disordered.

The protein belongs to the HMBS family. Monomer. Requires dipyrromethane as cofactor.

The enzyme catalyses 4 porphobilinogen + H2O = hydroxymethylbilane + 4 NH4(+). It functions in the pathway porphyrin-containing compound metabolism; protoporphyrin-IX biosynthesis; coproporphyrinogen-III from 5-aminolevulinate: step 2/4. Functionally, tetrapolymerization of the monopyrrole PBG into the hydroxymethylbilane pre-uroporphyrinogen in several discrete steps. The protein is Porphobilinogen deaminase of Paraburkholderia phytofirmans (strain DSM 17436 / LMG 22146 / PsJN) (Burkholderia phytofirmans).